A 512-amino-acid chain; its full sequence is Probable ubiquitin carboxyl-terminal hydrolase 3 (512 aa).

The tract at residues 64-109 is disordered; sequence TSKTKESEKSPKSWSAIAKKHVQGDSPVKKSHSVPVPSDRSEKKSF. In terms of domain architecture, USP spans 133 to 511; that stretch reads RGFINTGNIC…VAYLLFYTRR (379 aa). The active-site Nucleophile is cysteine 142. The Proton acceptor role is filled by histidine 453.

It belongs to the peptidase C19 family.

The catalysed reaction is Thiol-dependent hydrolysis of ester, thioester, amide, peptide and isopeptide bonds formed by the C-terminal Gly of ubiquitin (a 76-residue protein attached to proteins as an intracellular targeting signal).. This is Probable ubiquitin carboxyl-terminal hydrolase 3 (ubp3) from Schizosaccharomyces pombe (strain 972 / ATCC 24843) (Fission yeast).